Reading from the N-terminus, the 207-residue chain is C-type lectin domain family 2 member D11 (207 aa).

The Cytoplasmic portion of the chain corresponds to 1–44; sequence MSAKKASQPMLNTTGSLQEGEMGKMFHGKCLRIVSPESPAKLYC. Serine 7 and serine 16 each carry phosphoserine. Residues 45–65 traverse the membrane as a helical; Signal-anchor for type II membrane protein segment; the sequence is CYGVIMVLSVAVVALSVALSV. Over 66-207 the chain is Extracellular; sequence KMTPQISTIN…LQCKTPFSPM (142 aa). Residues 87–198 enclose the C-type lectin domain; that stretch reads VGNKCFYFSE…SCSKLNSYSL (112 aa). Asparagine 100 carries an N-linked (GlcNAc...) asparagine glycan.

The protein localises to the cell membrane. Its function is as follows. Receptor for KLRB1B that protects target cells against natural killer cell-mediated lysis. The protein is C-type lectin domain family 2 member D11 (Clec2d11) of Rattus norvegicus (Rat).